Reading from the N-terminus, the 814-residue chain is Valine--tRNA ligase (814 aa).

A 'HIGH' region motif is present at residues 46–56 (PTVSGQLHIGH). Positions 536-540 (KMSKS) match the 'KMSKS' region motif. Lys-539 serves as a coordination point for ATP.

Belongs to the class-I aminoacyl-tRNA synthetase family. ValS type 2 subfamily. Monomer.

The protein resides in the cytoplasm. The enzyme catalyses tRNA(Val) + L-valine + ATP = L-valyl-tRNA(Val) + AMP + diphosphate. In terms of biological role, catalyzes the attachment of valine to tRNA(Val). As ValRS can inadvertently accommodate and process structurally similar amino acids such as threonine, to avoid such errors, it has a 'posttransfer' editing activity that hydrolyzes mischarged Thr-tRNA(Val) in a tRNA-dependent manner. The polypeptide is Valine--tRNA ligase (Rickettsia typhi (strain ATCC VR-144 / Wilmington)).